The chain runs to 307 residues: GTPase Era (307 aa).

The 175-residue stretch at 7 to 181 folds into the Era-type G domain; sequence RCGWVALMGP…VELIRKKLPK (175 aa). A G1 region spans residues 15–22; sequence GPPNAGKS. 15 to 22 contacts GTP; it reads GPPNAGKS. Residues 41–45 form a G2 region; it reads QTTRN. The G3 stretch occupies residues 62–65; sequence DTPG. GTP is bound by residues 62–66 and 130–133; these read DTPGL and NKVD. The interval 130–133 is G4; that stretch reads NKVD. The segment at 160–162 is G5; the sequence is ISA. Residues 212–290 form the KH type-2 domain; the sequence is LRQEVPYSVA…HLELWVKVRE (79 aa).

Belongs to the TRAFAC class TrmE-Era-EngA-EngB-Septin-like GTPase superfamily. Era GTPase family. Monomer.

It is found in the cytoplasm. The protein localises to the cell inner membrane. In terms of biological role, an essential GTPase that binds both GDP and GTP, with rapid nucleotide exchange. Plays a role in 16S rRNA processing and 30S ribosomal subunit biogenesis and possibly also in cell cycle regulation and energy metabolism. This chain is GTPase Era, found in Desulfovibrio desulfuricans (strain ATCC 27774 / DSM 6949 / MB).